A 254-amino-acid polypeptide reads, in one-letter code: 3-deoxy-manno-octulosonate cytidylyltransferase (254 aa).

Belongs to the KdsB family.

Its subcellular location is the cytoplasm. It catalyses the reaction 3-deoxy-alpha-D-manno-oct-2-ulosonate + CTP = CMP-3-deoxy-beta-D-manno-octulosonate + diphosphate. The protein operates within nucleotide-sugar biosynthesis; CMP-3-deoxy-D-manno-octulosonate biosynthesis; CMP-3-deoxy-D-manno-octulosonate from 3-deoxy-D-manno-octulosonate and CTP: step 1/1. It functions in the pathway bacterial outer membrane biogenesis; lipopolysaccharide biosynthesis. Functionally, activates KDO (a required 8-carbon sugar) for incorporation into bacterial lipopolysaccharide in Gram-negative bacteria. The sequence is that of 3-deoxy-manno-octulosonate cytidylyltransferase from Pseudomonas paraeruginosa (strain DSM 24068 / PA7) (Pseudomonas aeruginosa (strain PA7)).